The sequence spans 334 residues: B3 domain-containing protein LOC_Os12g40090 (334 aa).

The TF-B3 1 DNA-binding region spans 5–102 (RIRFFRLMTG…SFDVLIFDAS (98 aa)). A disordered region spans residues 142–178 (TSTPSVLIGSPHKASTSKKLSGKTKTNPRKEPEDPNC). Positions 154–166 (KASTSKKLSGKTK) are enriched in low complexity. Positions 227-326 (FVVVLQTAHV…TMTVHVIGKA (100 aa)) form a DNA-binding region, TF-B3 2.

It is found in the nucleus. This is B3 domain-containing protein LOC_Os12g40090 from Oryza sativa subsp. japonica (Rice).